The sequence spans 134 residues: Proline-rich nuclear receptor coactivator 2 (134 aa).

The tract at residues 1-74 (MGGGERYNIP…NNSNWNASLS (74 aa)) is disordered. Polar residues-rich tracts occupy residues 11 to 24 (DPQS…QQQH) and 52 to 61 (SAVQNGGKTK). The segment covering 62–74 (SLSNNSNWNASLS) has biased composition (low complexity). The short motif at 94–100 (SEPPSPS) is the SH3-binding element.

Belongs to the PNRC family. PNRC2 subfamily. Interacts with UPF1/RENT1; preferentially interacts with hyperphosphorylated form. Interacts with DCP1A. Interacts with many nuclear receptors including ESR1, ESRRA, ESRRG, NR3C1/GR, NR5A1, PGR, TR, RAR and RXR.

It localises to the nucleus. The protein localises to the cytoplasm. It is found in the P-body. In terms of biological role, involved in nonsense-mediated mRNA decay (NMD) by acting as a bridge between the mRNA decapping complex and the NMD machinery. May act by targeting the NMD machinery to the P-body and recruiting the decapping machinery to aberrant mRNAs. Required for UPF1/RENT1 localization to the P-body. Plays a role in glucocorticoid receptor-mediated mRNA degradation by interacting with the glucocorticoid receptor NR3C1 in a ligand-dependent manner when it is bound to the 5' UTR of target mRNAs and recruiting the RNA helicase UPF1 and the mRNA-decapping enzyme DCP1A, leading to RNA decay. Also acts as a nuclear receptor coactivator. May play a role in controlling the energy balance between energy storage and energy expenditure. This chain is Proline-rich nuclear receptor coactivator 2 (Pnrc2), found in Rattus norvegicus (Rat).